Consider the following 164-residue polypeptide: 2S seed storage protein 3 (164 aa).

An N-terminal signal peptide occupies residues 1-21; the sequence is MANKLFLVCATLALCFLLTNA. 2 propeptides span residues 22–37 and 73–81; these read SIYR…DASN and GPSLDDEFD.

This sequence belongs to the 2S seed storage albumins family. The mature protein consists of a small and a large chain linked by disulfide bonds. Interacts with AHK2.

This is a 2S seed storage protein. The polypeptide is 2S seed storage protein 3 (AT2S3) (Arabidopsis thaliana (Mouse-ear cress)).